Consider the following 241-residue polypeptide: Ribonuclease PH (241 aa).

Residues R89 and 127 to 129 (GTR) contribute to the phosphate site.

It belongs to the RNase PH family. Homohexameric ring arranged as a trimer of dimers.

It catalyses the reaction tRNA(n+1) + phosphate = tRNA(n) + a ribonucleoside 5'-diphosphate. Functionally, phosphorolytic 3'-5' exoribonuclease that plays an important role in tRNA 3'-end maturation. Removes nucleotide residues following the 3'-CCA terminus of tRNAs; can also add nucleotides to the ends of RNA molecules by using nucleoside diphosphates as substrates, but this may not be physiologically important. Probably plays a role in initiation of 16S rRNA degradation (leading to ribosome degradation) during starvation. The protein is Ribonuclease PH of Xanthomonas axonopodis pv. citri (strain 306).